Here is a 205-residue protein sequence, read N- to C-terminus: Small ribosomal subunit protein uS4 (205 aa).

The S4 RNA-binding domain maps to 110–172; that stretch reads RRLQTIIYRK…VGSPITKEKL (63 aa). A disordered region spans residues 173–205; sequence MAKPQPASAPKAAAAPKAAAAPAEAAAAPKKEE. Residues 174–205 show a composition bias toward low complexity; it reads AKPQPASAPKAAAAPKAAAAPAEAAAAPKKEE.

Belongs to the universal ribosomal protein uS4 family. As to quaternary structure, part of the 30S ribosomal subunit. Contacts protein S5. The interaction surface between S4 and S5 is involved in control of translational fidelity.

Functionally, one of the primary rRNA binding proteins, it binds directly to 16S rRNA where it nucleates assembly of the body of the 30S subunit. In terms of biological role, with S5 and S12 plays an important role in translational accuracy. The sequence is that of Small ribosomal subunit protein uS4 from Methanocella arvoryzae (strain DSM 22066 / NBRC 105507 / MRE50).